A 352-amino-acid polypeptide reads, in one-letter code: Pre-rRNA-processing protein ipi1 (352 aa).

It belongs to the IPI1/TEX10 family. As to quaternary structure, component of the RIX1 complex, composed of rrm-9/ipi1, rix1/ipi2 and ipi3 in a 1:2:2 stoichiometry. The complex interacts (via rix1) with mdn1 (via its hexameric AAA ATPase ring) and the pre-60S ribosome particles.

It is found in the nucleus. Component of the RIX1 complex required for processing of ITS2 sequences from 35S pre-rRNA. The chain is Pre-rRNA-processing protein ipi1 (rrm-9) from Neurospora crassa (strain ATCC 24698 / 74-OR23-1A / CBS 708.71 / DSM 1257 / FGSC 987).